The sequence spans 505 residues: Glycerol kinase (505 aa).

Threonine 15 contributes to the ADP binding site. Residues threonine 15, threonine 16, and serine 17 each coordinate ATP. A sn-glycerol 3-phosphate-binding site is contributed by threonine 15. Residue arginine 19 participates in ADP binding. Sn-glycerol 3-phosphate contacts are provided by arginine 85, glutamate 86, tyrosine 136, and aspartate 249. Positions 85, 86, 136, 249, and 250 each coordinate glycerol. 2 residues coordinate ADP: threonine 271 and glycine 314. ATP is bound by residues threonine 271, glycine 314, glutamine 318, and glycine 415. Positions 415 and 419 each coordinate ADP.

This sequence belongs to the FGGY kinase family.

It carries out the reaction glycerol + ATP = sn-glycerol 3-phosphate + ADP + H(+). It participates in polyol metabolism; glycerol degradation via glycerol kinase pathway; sn-glycerol 3-phosphate from glycerol: step 1/1. Its activity is regulated as follows. Inhibited by fructose 1,6-bisphosphate (FBP). Functionally, key enzyme in the regulation of glycerol uptake and metabolism. Catalyzes the phosphorylation of glycerol to yield sn-glycerol 3-phosphate. The chain is Glycerol kinase from Mycoplasma capricolum subsp. capricolum (strain California kid / ATCC 27343 / NCTC 10154).